Here is a 1226-residue protein sequence, read N- to C-terminus: MYGQVERKRVNFGKITNLDYLPNLIQIQKRSFDWFLQADVKDETKRKHQGLEAVFRETFPIESPNNDMIMEYSHYILGEPKRSPQECKDTDATFAMPLKAVIRLIIKETGEIREQTVYMGDLPVMTEQGTFIINGAERVVVSQLHRSPGIFFSYDMERDVFSARVIPYRGSWLEFEMDNKGILIAKIDRKKKFPATLLIKSLGHGTNEEVLRLFYSSKKEKIAGATSKDLKKILGRRTINDIINMETGEVMLEAGSKVNEDNISILKEMKVKEVELIEFPKGKDNPILINALEKDGVNDYEDAILKFHSLMRQGEPSTIENATTELTRLFFSPKTFDLGEVGRYKINSKFEFNNPKEFSGEKARVLRPADIIETVRYILNLFSETENYYPDDIDHLGNRRIRSVGELISNQLKTGFSRVERVIKERMTVQEIETQTPQLLISIKPITAVINEFFGSSQLSQFMDQTNPLAELTHKRRLNALGPGGLSRDRAGMEVRDVHYSHYGRMCPIETPEGPNIGLILSMSSYARVNDYGFLETPYRTVKNGKVTGQIEHLTADKEEYHYIAQASGVIDEKGELKNKLISTRHRGDFPFRNPSEIQYMDLAPLQVVSVSTALIPFLEHDDANRALMGSNMQRQAVPLLREEAPFVGTGMETRAAYDSRICIVNKHDGVVTSVDAETIVVERKGGKESDTYSLTKFKKTNQGTCFNQKPIVGVVHSEINGKVSKVSKEKIEVTGENGELKEYVLQIGSKQYAPIVSSGEEVKRGTTLAGQVVVGEKLDEMGNILVKGTVLADGPAVDNGVLALGRNVLAAFMPWEGYNFEDAILISERIVRDDVFSSIHIEEFEIQARETKLGPEQITRDIPNLSDKAFRDLDETGVIRIGAEVKPGDILVGMVTPKGETDLTPEYKLLHSIFGEKAKDVRDSSLRMPNGFEGTVIDIKRFSRENQDELPAGVEEMVKVFVARKRKLLVGDKMAGRHGNKGVVARVMAEEDMPYMEDGTPLDIVLNPLGVPSRMNLGQIFETQLGFAASKLGISFETPVFDGAEESDVDNFCKEANLPLNSKFKLYDGRTGLPFMNEVFCGYIYILKLAHLVEDKIHARSTGPYSLVTQQPLGGKAQFGGQRLGEMEVWALEAYGASHTLQELLTIKSDDMLGRARIYEAIVKGIHSIKPGIPESFNVLVQELRGLALDIIITDSEGNTVDISDYEDEYSKSKKKIKFETIENA.

The protein belongs to the RNA polymerase beta chain family. As to quaternary structure, the RNAP catalytic core consists of 2 alpha, 1 beta, 1 beta' and 1 omega subunit. When a sigma factor is associated with the core the holoenzyme is formed, which can initiate transcription.

It catalyses the reaction RNA(n) + a ribonucleoside 5'-triphosphate = RNA(n+1) + diphosphate. Functionally, DNA-dependent RNA polymerase catalyzes the transcription of DNA into RNA using the four ribonucleoside triphosphates as substrates. This chain is DNA-directed RNA polymerase subunit beta, found in Leptospira borgpetersenii serovar Hardjo-bovis (strain JB197).